Here is a 659-residue protein sequence, read N- to C-terminus: MFKIYNNGNPIPMGYSQAVENNVQITNFALFSAAAIGVELCLFDEQNQETRLPMVRTENVWHLAVTGVKTGTEYAFRIHGEFANPQKLILDPYAKAVNGKPDLSSEESRSWFLLSDNRDNAHLAPRAVVISEEFDWENDTSPNTPWAETIVYELHVKGFSQLNEKIPAALRGTYTGLAHPVNLAYLKELGVTAVELLPVNFHINEPHLQARGLQNYWGYNPLAMFAVEPKYAATNNPLAEFKTMVKAFHKAGIEVILDVVFNHSAESEQTYPTFSQRGIDDQTYYWRNDQGRYINWTGCGNMLNLSSDVGRKWVVDCLRYWVEQCHIDGFRFDLATVLGRDTPDFNSSAQLFTDIKNEPSLQNIKLIAEPWDIGHYGYQVGNFPSYFAEWNDRFRDDLCRFWLWKSGEIGAFAERFAGSSDLFKKNDRLPHTTLNFITAHDGFTLKDLVSYNQKHNETNGEENRDGRNENYSYNHGVEGSTESLSEPQKSAVENNRTFAQSGLLMSLLLANGTPMLLAGDEFGNTQYGNNNAYCQDNEITWLKWANFNEELFELTKQTIALRKQIGSLNKDQWWSDENVQWLNIVGEPMTVEDWQNQQTKALQVVLDNRWLLLINAKAEGQMFHLPNRKWKPQIGTHNVTLEAQQAELSSMGFCMLNDE.

The active-site Nucleophile is the Asp-333. The active-site Proton donor is the Glu-369. Residues 456-468 (NETNGEENRDGRN) show a composition bias toward basic and acidic residues. The interval 456–486 (NETNGEENRDGRNENYSYNHGVEGSTESLSE) is disordered.

It belongs to the glycosyl hydrolase 13 family.

The sequence is that of Glycogen operon protein GlgX homolog (glgX) from Haemophilus influenzae (strain ATCC 51907 / DSM 11121 / KW20 / Rd).